Reading from the N-terminus, the 319-residue chain is Coproporphyrin III ferrochelatase 2 (319 aa).

Residues tyrosine 13, arginine 30, 46–47, serine 54, and tyrosine 125 contribute to the Fe-coproporphyrin III site; that span reads RY. 2 residues coordinate Fe(2+): histidine 181 and glutamate 262.

The protein belongs to the ferrochelatase family.

The protein localises to the cytoplasm. The enzyme catalyses Fe-coproporphyrin III + 2 H(+) = coproporphyrin III + Fe(2+). Its pathway is porphyrin-containing compound metabolism; protoheme biosynthesis. In terms of biological role, involved in coproporphyrin-dependent heme b biosynthesis. Catalyzes the insertion of ferrous iron into coproporphyrin III to form Fe-coproporphyrin III. In Bacillus thuringiensis subsp. konkukian (strain 97-27), this protein is Coproporphyrin III ferrochelatase 2.